The sequence spans 40 residues: Small polypeptide DEVIL 3 (40 aa).

The segment at 9 to 40 (PCNKKLGGYLKEQKGRLYIIRRCVVMLICWHD) is required for DVL/RTFL small polypeptide activity. The helical transmembrane segment at 12–28 (KKLGGYLKEQKGRLYII) threads the bilayer.

The protein belongs to the DVL/RTFL small polypeptides family. Mostly expressed in flowers and stems, and, to a lower extent, in roots and leaves.

It is found in the cell membrane. In terms of biological role, small polypeptide acting as a regulatory molecule which coordinates cellular responses required for differentiation, growth and development, including leaves shape, pedicule elongation, inflorescence organization and fruit maturation, probably by restricting polar cell proliferation in lateral organs and coordinating socket cell recruitment and differentiation at trichome sites. The protein is Small polypeptide DEVIL 3 of Arabidopsis thaliana (Mouse-ear cress).